The following is a 159-amino-acid chain: Aspartate carbamoyltransferase regulatory chain (159 aa).

Residues Cys111, Cys116, Cys141, and Cys144 each coordinate Zn(2+).

Belongs to the PyrI family. Contains catalytic and regulatory chains. Zn(2+) is required as a cofactor.

In terms of biological role, involved in allosteric regulation of aspartate carbamoyltransferase. This Aeropyrum pernix (strain ATCC 700893 / DSM 11879 / JCM 9820 / NBRC 100138 / K1) protein is Aspartate carbamoyltransferase regulatory chain.